A 414-amino-acid polypeptide reads, in one-letter code: Putative nickel insertion protein (414 aa).

A disordered region spans residues 70–91 (ATHHDHDHSQDQTHHHHADHAP).

Belongs to the LarC family.

The polypeptide is Putative nickel insertion protein (Picosynechococcus sp. (strain ATCC 27264 / PCC 7002 / PR-6) (Agmenellum quadruplicatum)).